Reading from the N-terminus, the 401-residue chain is Anhydro-N-acetylmuramic acid kinase (401 aa).

An ATP-binding site is contributed by 25-32 (GTSLDGLD).

The protein belongs to the anhydro-N-acetylmuramic acid kinase family.

It catalyses the reaction 1,6-anhydro-N-acetyl-beta-muramate + ATP + H2O = N-acetyl-D-muramate 6-phosphate + ADP + H(+). Its pathway is amino-sugar metabolism; 1,6-anhydro-N-acetylmuramate degradation. It functions in the pathway cell wall biogenesis; peptidoglycan recycling. Functionally, catalyzes the specific phosphorylation of 1,6-anhydro-N-acetylmuramic acid (anhMurNAc) with the simultaneous cleavage of the 1,6-anhydro ring, generating MurNAc-6-P. Is required for the utilization of anhMurNAc either imported from the medium or derived from its own cell wall murein, and thus plays a role in cell wall recycling. The chain is Anhydro-N-acetylmuramic acid kinase from Pseudoalteromonas atlantica (strain T6c / ATCC BAA-1087).